Reading from the N-terminus, the 36-residue chain is Potassium channel toxin alpha-KTx 16.5 (36 aa).

3 disulfides stabilise this stretch: Cys7–Cys28, Cys13–Cys33, and Cys17–Cys35. An interaction with Ca(2+)-activated K(+) channels region spans residues 26–33 (GKCQNKQC).

Belongs to the short scorpion toxin superfamily. Potassium channel inhibitor family. Alpha-KTx 16 subfamily. In terms of tissue distribution, expressed by the venom gland.

The protein localises to the secreted. Augments responses to direct muscle stimulation probably by blocking calcium-activated potassium channels. This chain is Potassium channel toxin alpha-KTx 16.5, found in Leiurus hebraeus (Hebrew deathstalker scorpion).